The following is a 297-amino-acid chain: MTDTNPENVNNSKITIICSAPDLASQNIKKHLLALREWKPLELPENSGFSAVLESADGKFRLVDIEEIHVFQDGLDKKLEAAGLPAELIIFASKHRSKEEVKSLTVHCTGNSSNEARLGGHPKELAVSSPPAMKSILMEMKRLAKVKGLDYDVTLEVTHHGPTELNVPSLYAEIGSTEGQWEEPVPGEIVARAILTVSLEKVPTAVGFGGGHYAMRQTGLLLETAISFGHNFPKYQLEFVDEALIRQAVEKSNAEFAYFDRKSMKSADRKRISQILEKLGLKVLKESEIREKYGREE.

The protein belongs to the DtdA deacylase family. In terms of assembly, monomer. It depends on Zn(2+) as a cofactor.

The catalysed reaction is a D-aminoacyl-tRNA + H2O = a tRNA + a D-alpha-amino acid + H(+). It carries out the reaction glycyl-tRNA(Ala) + H2O = tRNA(Ala) + glycine + H(+). Its function is as follows. D-aminoacyl-tRNA deacylase with broad substrate specificity. By recycling D-aminoacyl-tRNA to D-amino acids and free tRNA molecules, this enzyme counteracts the toxicity associated with the formation of D-aminoacyl-tRNA entities in vivo. The polypeptide is D-aminoacyl-tRNA deacylase (Methanosarcina acetivorans (strain ATCC 35395 / DSM 2834 / JCM 12185 / C2A)).